A 98-amino-acid polypeptide reads, in one-letter code: Putative pterin-4-alpha-carbinolamine dehydratase (98 aa).

The protein belongs to the pterin-4-alpha-carbinolamine dehydratase family.

It carries out the reaction (4aS,6R)-4a-hydroxy-L-erythro-5,6,7,8-tetrahydrobiopterin = (6R)-L-erythro-6,7-dihydrobiopterin + H2O. This is Putative pterin-4-alpha-carbinolamine dehydratase from Jannaschia sp. (strain CCS1).